The chain runs to 241 residues: Probable transcriptional regulatory protein LHK_02347 (241 aa).

It belongs to the TACO1 family.

The protein localises to the cytoplasm. This is Probable transcriptional regulatory protein LHK_02347 from Laribacter hongkongensis (strain HLHK9).